The chain runs to 691 residues: POU domain, class 6, transcription factor 2 (691 aa).

Residues 25–36 (MNAELRGEDKAA) show a composition bias toward basic and acidic residues. Disordered regions lie at residues 25–93 (MNAE…PVGP), 186–297 (LQQQ…LQLV), and 435–461 (SQAS…SALS). Residues 186 to 195 (LQQQQQQQQQ) are compositionally biased toward low complexity. A compositionally biased stretch (pro residues) spans 196-210 (QPPPSTNQHPQPAPQ). Low complexity predominate over residues 211–220 (APSQSQQQPL). Over residues 221 to 238 (QPTPPQQPPPASQQPPAP) the composition is skewed to pro residues. 2 stretches are compositionally biased toward low complexity: residues 239-280 (TSQL…SQSP) and 438-461 (SMSQ…SALS). The 111-residue stretch at 476-586 (VDGVNLEEIR…VLERWMAEAE (111 aa)) folds into the POU-specific domain. The homeobox DNA-binding region spans 607–666 (KRKRRTSFTPQALEILNAHFEKNTHPSGQEMTEIAEKLNYDREVVRVWFCNKRQALKNTI).

This sequence belongs to the POU transcription factor family. Class-6 subfamily. As to expression, expressed only within the CNS, where its expression is restricted to the medical habenulla, to a dispersed population of neurons in the dorsal hypothalamus, and to subsets of ganglion and amacrine cells in the retina.

The protein resides in the nucleus. Probable transcription factor likely to be involved in early steps in the differentiation of amacrine and ganglion cells. Recognizes and binds to the DNA sequence 5'-ATGCAAAT-3'. Isoform 1 does not bind DNA. The chain is POU domain, class 6, transcription factor 2 (POU6F2) from Homo sapiens (Human).